Here is a 514-residue protein sequence, read N- to C-terminus: DNA-(apurinic or apyrimidinic site) endonuclease 2 (514 aa).

Asn-8 and Glu-48 together coordinate Mg(2+). Residue Tyr-156 is part of the active site. Mg(2+) contacts are provided by Asp-197, Asn-199, Asp-303, and His-304. Asp-197 (proton donor/acceptor) is an active-site residue. His-304 functions as the Proton acceptor in the catalytic mechanism. Residues 359–417 (PSNQTQVHMRKNKARVRSTRSRPSKTGSSRGQKNLMSYFQPSSSGPQTSNLDLPSLGTL) are disordered. The span at 366–381 (HMRKNKARVRSTRSRP) shows a compositional bias: basic residues. A Glycyl lysine isopeptide (Lys-Gly) (interchain with G-Cter in ubiquitin) cross-link involves residue Lys-371. A compositionally biased stretch (polar residues) spans 382–410 (SKTGSSRGQKNLMSYFQPSSSGPQTSNLD). The interval 390–397 (QKNLMSYF) is required for the interaction and colocalization with PCNA in nuclear foci in presence of oxidative-induced DNA damaging agents. Positions 465, 468, 491, and 505 each coordinate Zn(2+). A GRF-type zinc finger spans residues 465–514 (CGGHREPCVMRTVKKPGPNLGRHFYMCARPQGPPTDPSSRCNFFLWSRPS).

The protein belongs to the DNA repair enzymes AP/ExoA family. In terms of assembly, interacts with PCNA; this interaction is triggered by reactive oxygen species and increased by misincorporation of uracil in nuclear DNA. The cofactor is Mg(2+). Requires Mn(2+) as cofactor. Ubiquitinated by the CUL9-RBX1 complex. Ubiquitinated by MKRN3 at Lys-371 leading to proteasomal degradation.

The protein localises to the nucleus. It localises to the cytoplasm. It is found in the mitochondrion. The catalysed reaction is Exonucleolytic cleavage in the 3'- to 5'-direction to yield nucleoside 5'-phosphates.. With respect to regulation, 3'-5' exonuclease activity is activated by sodium and manganese. 3'-5' exonuclease and 3'-phosphodiesterase activities are stimulated in presence of PCNA. In terms of biological role, functions as a weak apurinic/apyrimidinic (AP) endodeoxyribonuclease in the DNA base excision repair (BER) pathway of DNA lesions induced by oxidative and alkylating agents. Initiates repair of AP sites in DNA by catalyzing hydrolytic incision of the phosphodiester backbone immediately adjacent to the damage, generating a single-strand break with 5'-deoxyribose phosphate and 3'-hydroxyl ends. Also displays double-stranded DNA 3'-5' exonuclease, 3'-phosphodiesterase activities. Shows robust 3'-5' exonuclease activity on 3'-recessed heteroduplex DNA and is able to remove mismatched nucleotides preferentially. Shows fairly strong 3'-phosphodiesterase activity involved in the removal of 3'-damaged termini formed in DNA by oxidative agents. In the nucleus functions in the PCNA-dependent BER pathway. Plays a role in reversing blocked 3' DNA ends, problematic lesions that preclude DNA synthesis. Required for somatic hypermutation (SHM) and DNA cleavage step of class switch recombination (CSR) of immunoglobulin genes. Required for proper cell cycle progression during proliferation of peripheral lymphocytes. The sequence is that of DNA-(apurinic or apyrimidinic site) endonuclease 2 (APEX2) from Bos taurus (Bovine).